The chain runs to 149 residues: Ribosome maturation factor RimP (149 aa).

This sequence belongs to the RimP family.

Its subcellular location is the cytoplasm. Required for maturation of 30S ribosomal subunits. The polypeptide is Ribosome maturation factor RimP (Clostridium acetobutylicum (strain ATCC 824 / DSM 792 / JCM 1419 / IAM 19013 / LMG 5710 / NBRC 13948 / NRRL B-527 / VKM B-1787 / 2291 / W)).